The primary structure comprises 117 residues: G antigen 1 (117 aa).

Positions 1 to 117 are disordered; the sequence is MSWRGRSTYY…PEEGEGQSQC (117 aa). 2 stretches are compositionally biased toward acidic residues: residues 32 to 45 and 87 to 96; these read FSDE…EEGE and ECEDGPDGQE.

The protein belongs to the GAGE family. In terms of tissue distribution, expressed in a variety of tumor tissues but not in normal tissues, except testis.

Functionally, antigen, recognized on melanoma by autologous cytolytic T-lymphocytes. In Homo sapiens (Human), this protein is G antigen 1.